Here is a 149-residue protein sequence, read N- to C-terminus: 3-dehydroquinate dehydratase (149 aa).

Tyr26 acts as the Proton acceptor in catalysis. Positions 77, 83, and 90 each coordinate substrate. His103 serves as the catalytic Proton donor. Residues 104–105 (LS) and Arg114 each bind substrate.

Belongs to the type-II 3-dehydroquinase family. Homododecamer.

It catalyses the reaction 3-dehydroquinate = 3-dehydroshikimate + H2O. The protein operates within metabolic intermediate biosynthesis; chorismate biosynthesis; chorismate from D-erythrose 4-phosphate and phosphoenolpyruvate: step 3/7. In terms of biological role, catalyzes a trans-dehydration via an enolate intermediate. The polypeptide is 3-dehydroquinate dehydratase (Aeromonas salmonicida (strain A449)).